The primary structure comprises 633 residues: Glutamyl-tRNA(Gln) amidotransferase subunit E (633 aa).

It belongs to the GatB/GatE family. GatE subfamily. In terms of assembly, heterodimer of GatD and GatE.

The enzyme catalyses L-glutamyl-tRNA(Gln) + L-glutamine + ATP + H2O = L-glutaminyl-tRNA(Gln) + L-glutamate + ADP + phosphate + H(+). Functionally, allows the formation of correctly charged Gln-tRNA(Gln) through the transamidation of misacylated Glu-tRNA(Gln) in organisms which lack glutaminyl-tRNA synthetase. The reaction takes place in the presence of glutamine and ATP through an activated gamma-phospho-Glu-tRNA(Gln). The GatDE system is specific for glutamate and does not act on aspartate. This chain is Glutamyl-tRNA(Gln) amidotransferase subunit E, found in Methanococcus vannielii (strain ATCC 35089 / DSM 1224 / JCM 13029 / OCM 148 / SB).